The chain runs to 883 residues: MNEQYSALRSNVSMLGKVLGETIKDALGEHILERVETIRKLSKSSRAGNDANRQELLTTLQNLSNDELLPVARAFSQFLNLANTAEQYHSISPKGEAASNPEVIARTLRKLKNQPELSEDTIKKAVESLSLELVLTAHPTEITRRTLIHKMVEVNACLKQLDNKDIADYERNQLMRRLRQLIAQSWHTDEIRKLRPSPVDEAKWGFAVVENSLWQGVPNYLRELNEQLEENLGYKLPVEFVPVRFTSWMGGDRDGNPNVTADITRHVLLLSRWKATDLFLKDIQVLVSELSMVEATPELLALVGEEGAAEPYRYLMKNLRSRLMATQAWLEARLKGEELPKPEGLLTQNEELWEPLYACYQSLQACGMGIIANGDLLDTLRRVKCFGVPLVRIDIRQESTRHTEALGELTRYLGIGDYESWSEADKQAFLIRELNSKRPLLPRNWQPSAETREVLDTCQVIAEAPQGSIAAYVISMAKTPSDVLAVHLLLKEAGIGFAMPVAPLFETLDDLNNANDVMTQLLNIDWYRGLIQGKQMVMIGYSDSAKDAGVMAASWAQYQAQDALIKTCEKAGIELTLFHGRGGSIGRGGAPAHAALLSQPPGSLKGGLRVTEQGEMIRFKYGLPEITVSSLSLYTGAILEANLLPPPEPKESWRRIMDELSVISCDLYRGYVRENKDFVPYFRSATPEQELGKLPLGSRPAKRRPTGGVESLRAIPWIFAWTQNRLMLPAWLGAGTALQKVVEDGKQSELEAMCRDWPFFSTRLGMLEMVFAKADLWLAEYYDQRLVDKALWPLGKELRNLQEEDIKVVLAIANDSHLMADLPWIAESIQLRNIYTDPLNVLQAELLHRSRQAEKEGQEPDPRVEQALMVTIAGIAAGMRNTG.

Active-site residues include histidine 138 and lysine 546.

It belongs to the PEPCase type 1 family. It depends on Mg(2+) as a cofactor.

It carries out the reaction oxaloacetate + phosphate = phosphoenolpyruvate + hydrogencarbonate. Its function is as follows. Forms oxaloacetate, a four-carbon dicarboxylic acid source for the tricarboxylic acid cycle. In Shigella flexneri, this protein is Phosphoenolpyruvate carboxylase.